The following is a 284-amino-acid chain: Probable endonuclease 4 (284 aa).

Zn(2+) is bound by residues H69, H109, E145, D179, H182, H216, D229, H231, and E261.

Belongs to the AP endonuclease 2 family. The cofactor is Zn(2+).

The enzyme catalyses Endonucleolytic cleavage to 5'-phosphooligonucleotide end-products.. Endonuclease IV plays a role in DNA repair. It cleaves phosphodiester bonds at apurinic or apyrimidinic (AP) sites, generating a 3'-hydroxyl group and a 5'-terminal sugar phosphate. In Klebsiella pneumoniae subsp. pneumoniae (strain ATCC 700721 / MGH 78578), this protein is Probable endonuclease 4.